Reading from the N-terminus, the 329-residue chain is Secretory carrier-associated membrane protein 2 (329 aa).

Disordered stretches follow at residues 1 to 21 (MSAF…FQDP) and 51 to 72 (VTQL…PTQP). Over 1–153 (MSAFDTNPFA…DYQRICKMLY (153 aa)) the chain is Cytoplasmic. Residues 154–174 (YLWMLHSVTLFLNLLACLAWF) traverse the membrane as a helical segment. Over 175–181 (SGNSSKG) the chain is Lumenal. Residues 182 to 202 (VDFGLSILWFLIFTPCAFLCW) traverse the membrane as a helical segment. Topologically, residues 203 to 218 (YRPIYKAFRSDNSFSF) are cytoplasmic. Residues 203 to 218 (YRPIYKAFRSDNSFSF) are interaction with SLC9A7. A helical membrane pass occupies residues 219 to 239 (FVFFFVFFCQIGIYIIQLVGI). At 240–262 (PGLGDSGWIAALSTLDNHSLAIS) the chain is on the lumenal side. Residues 263-283 (VIMMVVAGFFTLCAVLSVFLL) form a helical membrane-spanning segment. The Cytoplasmic segment spans residues 284-329 (QRVHSLYRRTGASFQQAQEEFSQGIFSSRTFHRAASSAAQGAFQGN). Phosphoserine is present on residues S319 and S320.

Belongs to the SCAMP family. Interacts with SLC6A4 and SLC9A7. Interacts with SLC9A5; this interaction regulates SLC9A5 cell-surface targeting and SLC9A5 activity. In terms of tissue distribution, widely expressed.

Its subcellular location is the golgi apparatus. The protein localises to the trans-Golgi network membrane. The protein resides in the recycling endosome membrane. Functions in post-Golgi recycling pathways. Acts as a recycling carrier to the cell surface. In Homo sapiens (Human), this protein is Secretory carrier-associated membrane protein 2 (SCAMP2).